The following is a 155-amino-acid chain: Small ribosomal subunit protein uS7cz/uS7cy (155 aa).

Belongs to the universal ribosomal protein uS7 family. As to quaternary structure, part of the 30S ribosomal subunit.

It is found in the plastid. It localises to the chloroplast. One of the primary rRNA binding proteins, it binds directly to 16S rRNA where it nucleates assembly of the head domain of the 30S subunit. The sequence is that of Small ribosomal subunit protein uS7cz/uS7cy (rps7-A) from Piper cenocladum (Ant piper).